The sequence spans 112 residues: UPF0145 protein RB3016 (112 aa).

The protein belongs to the UPF0145 family.

The chain is UPF0145 protein RB3016 from Rhodopirellula baltica (strain DSM 10527 / NCIMB 13988 / SH1).